An 87-amino-acid polypeptide reads, in one-letter code: Glutaredoxin (87 aa).

The Glutaredoxin domain maps to 1 to 87 (MFKVYGYDSN…GFDQLREYFK (87 aa)). A disulfide bond links cysteine 14 and cysteine 17.

This sequence belongs to the glutaredoxin family.

Serves as a reducing agent for the phage-induced ribonucleotide reductase, but not for the bacterial ones. This specificity may be the result of sequence differences around the redox-active disulfide bond. The oxidized form accepts electrons from bacterial glutathione and will, in turn, reduce other small disulfides. Can also be reduced by NADPH and by bacterial thioredoxin reductase. In Enterobacteria phage T4 (Bacteriophage T4), this protein is Glutaredoxin (NRDC).